A 362-amino-acid polypeptide reads, in one-letter code: Probable S-adenosylmethionine-dependent methyltransferase At5g37990 (362 aa).

S-adenosyl-L-homocysteine-binding residues include Tyr-19, Cys-66, Asn-71, Asp-107, Ser-136, and Phe-137. Residues Asn-175, Glu-261, and Phe-263 each coordinate Mg(2+).

Belongs to the methyltransferase superfamily. Type-7 methyltransferase family. Homodimer. Requires Mg(2+) as cofactor.

The polypeptide is Probable S-adenosylmethionine-dependent methyltransferase At5g37990 (Arabidopsis thaliana (Mouse-ear cress)).